Reading from the N-terminus, the 437-residue chain is Dolichyl-diphosphooligosaccharide--protein glycosyltransferase 48 kDa subunit (437 aa).

Residues 1-24 (MASLRVSVLLVAASCLLLGSGLRA) form the signal peptide. Residues 25–407 (GPRTLVLLEN…QYERFIPSAY (383 aa)) are Lumenal-facing. A helical transmembrane segment spans residues 408 to 428 (PYYASAFSVMFGLFIFSIVFL). Residues 429–437 (HMKEKEKSD) lie on the Cytoplasmic side of the membrane.

Belongs to the DDOST 48 kDa subunit family. As to quaternary structure, component of the oligosaccharyltransferase (OST) complex.

The protein resides in the endoplasmic reticulum membrane. It functions in the pathway protein modification; protein glycosylation. Subunit of the oligosaccharyl transferase (OST) complex that catalyzes the initial transfer of a defined glycan (Glc(3)Man(9)GlcNAc(2) in eukaryotes) from the lipid carrier dolichol-pyrophosphate to an asparagine residue within an Asn-X-Ser/Thr consensus motif in nascent polypeptide chains, the first step in protein N-glycosylation. N-glycosylation occurs cotranslationally and the complex associates with the Sec61 complex at the channel-forming translocon complex that mediates protein translocation across the endoplasmic reticulum (ER). All subunits are required for a maximal enzyme activity. Required for the assembly of both SST3A- and SS3B-containing OST complexes. The polypeptide is Dolichyl-diphosphooligosaccharide--protein glycosyltransferase 48 kDa subunit (Xenopus tropicalis (Western clawed frog)).